Reading from the N-terminus, the 549-residue chain is Oxygen-dependent choline dehydrogenase (549 aa).

4–33 (DFVIIGSGSAGSALAYRLSEGGKNSVIVIE) contacts FAD. The Proton acceptor role is filled by histidine 465.

The protein belongs to the GMC oxidoreductase family. The cofactor is FAD.

It carries out the reaction choline + A = betaine aldehyde + AH2. The catalysed reaction is betaine aldehyde + NAD(+) + H2O = glycine betaine + NADH + 2 H(+). The protein operates within amine and polyamine biosynthesis; betaine biosynthesis via choline pathway; betaine aldehyde from choline (cytochrome c reductase route): step 1/1. Involved in the biosynthesis of the osmoprotectant glycine betaine. Catalyzes the oxidation of choline to betaine aldehyde and betaine aldehyde to glycine betaine at the same rate. This is Oxygen-dependent choline dehydrogenase from Rhizobium johnstonii (strain DSM 114642 / LMG 32736 / 3841) (Rhizobium leguminosarum bv. viciae).